The primary structure comprises 57 residues: RPSFCNLPVKPGPCSGFFSAFYYSQKTNKCHSFTYGGCRGNGNRFRTIEECRRTCVG.

In terms of domain architecture, BPTI/Kunitz inhibitor spans cysteine 5–cysteine 55. Disulfide bonds link cysteine 5/cysteine 55, cysteine 14/cysteine 38, and cysteine 30/cysteine 51.

This sequence belongs to the venom Kunitz-type family. As to expression, expressed by the venom gland.

It is found in the secreted. Its function is as follows. Interacts with vasopressin V2 receptor (V2R/AVPR2), probably in a selective manner. Inhibits vasopressin binding human V2R in the nanomolar range (Ki=7.34 nM), and also potently inhibits vasopressin-induced cAMP production (IC(50)=26 nM). In vivo, intraperitoneal injection of this protein into rats increases diuresis by 8.6-fold, without any loss of electrolytes. The sequence is that of Mambaquaretin-4 from Dendroaspis viridis (Western green mamba).